We begin with the raw amino-acid sequence, 257 residues long: Zinc transporter ZupT (257 aa).

The next 5 membrane-spanning stretches (helical) occupy residues 5–25 (LILT…AVLG), 32–52 (VLAF…LMEM), 61–81 (GMSP…YFGL), 109–129 (AILL…ATFV), and 137–157 (LGMG…LAVA). Positions 120 and 123 each coordinate Fe(2+). Glu123 and His148 together coordinate Zn(2+). Residues Asn149, Glu152, and Glu181 each coordinate Fe(2+). Residue Glu152 participates in Zn(2+) binding. 3 helical membrane passes run 182 to 202 (ILGG…VVMA), 203 to 223 (AVMA…LMPL), and 236 to 256 (GVLC…TAGI).

This sequence belongs to the ZIP transporter (TC 2.A.5) family. ZupT subfamily.

It localises to the cell inner membrane. The catalysed reaction is Zn(2+)(in) = Zn(2+)(out). In terms of biological role, mediates zinc uptake. May also transport other divalent cations. The chain is Zinc transporter ZupT from Escherichia fergusonii (strain ATCC 35469 / DSM 13698 / CCUG 18766 / IAM 14443 / JCM 21226 / LMG 7866 / NBRC 102419 / NCTC 12128 / CDC 0568-73).